The primary structure comprises 162 residues: Lymphocyte antigen 86 (162 aa).

The first 20 residues, 1–20, serve as a signal peptide directing secretion; it reads MKGFTATLFLWTLIFPSCSG. Cystine bridges form between cysteine 33–cysteine 58, cysteine 45–cysteine 154, and cysteine 102–cysteine 112. Residue asparagine 96 is glycosylated (N-linked (GlcNAc...) asparagine). A glycan (N-linked (GlcNAc...) asparagine) is linked at asparagine 156.

In terms of assembly, M-shaped tetramer of two CD180-LY86 heterodimers. As to expression, highly expressed in B-cells, monocytes and tonsil.

The protein localises to the secreted. It localises to the extracellular space. Functionally, may cooperate with CD180 and TLR4 to mediate the innate immune response to bacterial lipopolysaccharide (LPS) and cytokine production. Important for efficient CD180 cell surface expression. The protein is Lymphocyte antigen 86 (LY86) of Homo sapiens (Human).